A 365-amino-acid chain; its full sequence is MIMKFFDREREINEILGILDETPDNIYFIYGPINSGKTTLMMEIINRLKDDKKYRIFYYNLRGVRISSYSDFFDIMFEIREDNKFKQMVKDADVLVEGIKFIEKTAKLFNESIILPSDLAKVILSKQKGFDVFRYLERVFREMNKKGLKPVIIIDELQRLKGLKSNGELIDDLFNFFVRLTKELHITHCFCLSSDSLFIEYVYDRAELRGRADYILVDDFDKETALKFMDFLSEDILGRKLSEDEKELIYSYVGGKPKDVYDVIIKLKLGKELKDILEFMLKEEIQKLKYFLEDVKEDDEELYNKIVDALKIFKENYEIEDIKIPKNIREFLVKKNILFLNPIEGTLKPQSFLVWNAIKKLLNGH.

ATP is bound at residue 31 to 38 (GPINSGKT).

The protein belongs to the archaeal ATPase family.

This is an uncharacterized protein from Methanocaldococcus jannaschii (strain ATCC 43067 / DSM 2661 / JAL-1 / JCM 10045 / NBRC 100440) (Methanococcus jannaschii).